The following is a 218-amino-acid chain: THAP domain-containing protein 3 (218 aa).

The THAP-type zinc finger occupies Met1–Phe82. Disordered stretches follow at residues Gly97–Pro120 and Ala133–Pro154. The residue at position 100 (Ser100) is a Phosphoserine. Positions Asp156–Tyr159 match the HCFC1-binding motif (HBM) motif.

Component of a THAP1/THAP3-HCFC1-OGT complex that contains at least, either THAP1 or THAP3, HCFC1 and OGT. Interacts directly with OGT and HCFC1 (via its HBM). In terms of tissue distribution, highest levels in heart, liver and kidney. Lower levels in brain and lung.

Component of a THAP1/THAP3-HCFC1-OGT complex that is required for the regulation of the transcriptional activity of RRM1. This chain is THAP domain-containing protein 3 (Thap3), found in Mus musculus (Mouse).